The primary structure comprises 232 residues: Ribonuclease 3 (232 aa).

Residues 6-135 (QDYLAKTYGI…FIGALYLDQG (130 aa)) form the RNase III domain. Glu48 provides a ligand contact to Mg(2+). Residue Asp52 is part of the active site. Residues Asp121 and Glu124 each coordinate Mg(2+). Residue Glu124 is part of the active site. A DRBM domain is found at 161–230 (DAKTSLQEFL…AKHALEKLRM (70 aa)).

The protein belongs to the ribonuclease III family. In terms of assembly, homodimer. The cofactor is Mg(2+).

The protein localises to the cytoplasm. The catalysed reaction is Endonucleolytic cleavage to 5'-phosphomonoester.. Digests double-stranded RNA. Involved in the processing of primary rRNA transcript to yield the immediate precursors to the large and small rRNAs (23S and 16S). Processes some mRNAs, and tRNAs when they are encoded in the rRNA operon. Processes pre-crRNA and tracrRNA of type II CRISPR loci if present in the organism. In Limosilactobacillus fermentum (strain NBRC 3956 / LMG 18251) (Lactobacillus fermentum), this protein is Ribonuclease 3.